Here is a 206-residue protein sequence, read N- to C-terminus: Small ribosomal subunit protein uS4 (206 aa).

Residues 96–156 (TRLDNVVYRM…EKSRTQARIK (61 aa)) form the S4 RNA-binding domain.

Belongs to the universal ribosomal protein uS4 family. Part of the 30S ribosomal subunit. Contacts protein S5. The interaction surface between S4 and S5 is involved in control of translational fidelity.

In terms of biological role, one of the primary rRNA binding proteins, it binds directly to 16S rRNA where it nucleates assembly of the body of the 30S subunit. With S5 and S12 plays an important role in translational accuracy. The protein is Small ribosomal subunit protein uS4 of Shewanella putrefaciens (strain CN-32 / ATCC BAA-453).